The following is a 307-amino-acid chain: D-alanine--D-alanine ligase (307 aa).

In terms of domain architecture, ATP-grasp spans 101–301 (KTVMRAAGVD…FGELVRWMVE (201 aa)). 127–182 (PLPPPYVVKPIAEGSSVGVIIVRDGRSHPPQILASEEWTFGEQVLAEPYIAGRELT) is an ATP binding site. Residues D251, E268, and N270 each contribute to the Mg(2+) site.

The protein belongs to the D-alanine--D-alanine ligase family. Requires Mg(2+) as cofactor. Mn(2+) serves as cofactor.

The protein resides in the cytoplasm. It catalyses the reaction 2 D-alanine + ATP = D-alanyl-D-alanine + ADP + phosphate + H(+). Its pathway is cell wall biogenesis; peptidoglycan biosynthesis. In terms of biological role, cell wall formation. In Methylobacterium radiotolerans (strain ATCC 27329 / DSM 1819 / JCM 2831 / NBRC 15690 / NCIMB 10815 / 0-1), this protein is D-alanine--D-alanine ligase.